The primary structure comprises 340 residues: Methionyl-tRNA formyltransferase (340 aa).

110–113 (SLLP) contributes to the (6S)-5,6,7,8-tetrahydrofolate binding site.

It belongs to the Fmt family.

The enzyme catalyses L-methionyl-tRNA(fMet) + (6R)-10-formyltetrahydrofolate = N-formyl-L-methionyl-tRNA(fMet) + (6S)-5,6,7,8-tetrahydrofolate + H(+). Attaches a formyl group to the free amino group of methionyl-tRNA(fMet). The formyl group appears to play a dual role in the initiator identity of N-formylmethionyl-tRNA by promoting its recognition by IF2 and preventing the misappropriation of this tRNA by the elongation apparatus. This chain is Methionyl-tRNA formyltransferase, found in Synechococcus sp. (strain WH7803).